The sequence spans 296 residues: MAELVLKTDFPDLKLAGRGKVRDIYDLGDALLIVTTDRISAFDVIMNEAIPDKGYVLTQISSFWFRQMEDIIPNHIISTDVKDFPAECQKYAAQLEGRSMLVKKAKPLPVECIVRGYISGSGWKDYKATGAICGITLPAGLVESDKLEEPIFTPSTKAELGEHDENISFDKCVELIGRELAEKIRDVTIAIYKRARDIADTKGIIIADTKFEYGIYNGELIIIDECMTPDSSRFWPKDSYKPGGAQPSFDKQFLRDYLETLDWGKTAPAPPLPEEIVRKTGEKYMEALVRLTGKGK.

The protein belongs to the SAICAR synthetase family.

It carries out the reaction 5-amino-1-(5-phospho-D-ribosyl)imidazole-4-carboxylate + L-aspartate + ATP = (2S)-2-[5-amino-1-(5-phospho-beta-D-ribosyl)imidazole-4-carboxamido]succinate + ADP + phosphate + 2 H(+). Its pathway is purine metabolism; IMP biosynthesis via de novo pathway; 5-amino-1-(5-phospho-D-ribosyl)imidazole-4-carboxamide from 5-amino-1-(5-phospho-D-ribosyl)imidazole-4-carboxylate: step 1/2. This chain is Phosphoribosylaminoimidazole-succinocarboxamide synthase, found in Geobacter sulfurreducens (strain ATCC 51573 / DSM 12127 / PCA).